Reading from the N-terminus, the 839-residue chain is Dynein axonemal assembly factor 5 (839 aa).

HEAT repeat units follow at residues 10-48 (TSDV…DEKL), 54-92 (QHVF…HVPR), 94-137 (EEAL…VCGK), 140-178 (APYL…CIPE), 181-219 (HMQA…YSSG), 221-257 (SVDD…KLQD), 259-297 (YSFF…QWEK), 578-617 (GETL…KASE), 675-713 (LQVE…TCER), 717-755 (PDKL…CITD), and 723-761 (IYPE…ERTT).

The protein belongs to the DNAAF5 family. Interacts with DNAI2; probably involved in outer arm dynein assembly.

It localises to the cytoplasm. The protein resides in the dynein axonemal particle. In terms of biological role, cytoplasmic protein involved in the delivery of the dynein machinery to the motile cilium. It is required for the assembly of the axonemal dynein inner and outer arms, two structures attached to the peripheral outer doublet A microtubule of the axoneme, that play a crucial role in cilium motility. The protein is Dynein axonemal assembly factor 5 of Xenopus laevis (African clawed frog).